A 438-amino-acid polypeptide reads, in one-letter code: MGLSMDRSPYARTGDQQRGCWYYLRYFFLFVSLIQFLIILGLVLFMIYGNVHATTESSLRATEIRADSLYSQVVGLSASQANLSKQLNISLLVKETVMQQLLTTRREMERINASFRQCQGDLITYINYNRFIAAIILSEKQCQEQLKEVNKTCEALLFKLGEKVKTLEMEVAKEKAVCSKDKESLLAGKRQTEEQLEACGKARERQQQEQQVTEENLRKVQSLCIPLDQEKFQADVLSAWRDSLIYRTLETLPYHYQLMPEYASLRRTCESLPGIMTTKIEELARGLRAGIERVTRENAELRRQKLELERAAQAAQEARARAGTEAQARETQLRAECARQTQLALEEKAALRAQRDNLERELEARKRELEQLRTEVDVRISALDTCVKAKSLPAVPPRVSGPPPNPPPIDPASLEEFKKRILESQRLPVVNPAAQPSG.

Residues 1–26 (MGLSMDRSPYARTGDQQRGCWYYLRY) are Cytoplasmic-facing. A helical; Signal-anchor for type II membrane protein membrane pass occupies residues 27–47 (FFLFVSLIQFLIILGLVLFMI). Topologically, residues 48–438 (YGNVHATTES…VVNPAAQPSG (391 aa)) are extracellular. N82, N88, N112, and N150 each carry an N-linked (GlcNAc...) asparagine glycan. Coiled-coil stretches lie at residues 140-160 (KQCQ…LFKL), 189-224 (KRQT…QSLC), and 281-383 (EELA…ISAL). The segment at 391–413 (SLPAVPPRVSGPPPNPPPIDPAS) is disordered. Residues 394-410 (AVPPRVSGPPPNPPPID) show a composition bias toward pro residues.

In terms of assembly, homodimer. Expressed in lung, kidney, spleen, heart, muscle, eye, pancreas, thyroid, thymus, submaxillary gland, prostate, epididymis, uterus and liver.

Its subcellular location is the cell membrane. The protein resides in the membrane. The protein localises to the caveola. It localises to the cytoplasm. It is found in the perinuclear region. Its function is as follows. Endothelial cell-specific membrane protein involved in the formation of the diaphragms that bridge endothelial fenestrae. It is also required for the formation of stomata of caveolae and transendothelial channels. Functions in microvascular permeability, endothelial fenestrae contributing to the passage of water and solutes and regulating transcellular versus paracellular flow in different organs. Plays a specific role in embryonic development. The sequence is that of Plasmalemma vesicle-associated protein (Plvap) from Mus musculus (Mouse).